We begin with the raw amino-acid sequence, 539 residues long: Cytochrome c oxidase subunit 1 homolog, bacteroid (539 aa).

The next 3 membrane-spanning stretches (helical) occupy residues 4-24, 28-48, and 75-95; these read TVEM…AGLA, LFGA…LVLM, and GVVA…VVAL. Residue His-117 coordinates heme b. The next 8 helical transmembrane spans lie at 118 to 138, 154 to 174, 187 to 207, 214 to 234, 265 to 285, 298 to 318, 330 to 350, and 368 to 388; these read TSAV…FYVV, FVFW…LLGI, VDLW…GTIM, IYVA…LHVV, GHNA…YYFI, LSII…PHHL, LGMV…INGL, and MMVM…MMSI. The Cu cation site is built by His-266, His-316, and His-317. The heme b site is built by His-404 and His-406. 4 consecutive transmembrane segments (helical) span residues 405 to 425, 443 to 463, 475 to 495, and 499 to 519; these read VHSG…YYLV, HFWL…VAGI, QGFL…YYVM, and GGAL…MTIL.

The protein belongs to the heme-copper respiratory oxidase family. Cu(2+) is required as a cofactor. The cofactor is heme b.

The protein localises to the cell membrane. It carries out the reaction 4 Fe(II)-[cytochrome c] + O2 + 8 H(+)(in) = 4 Fe(III)-[cytochrome c] + 2 H2O + 4 H(+)(out). The protein operates within energy metabolism; oxidative phosphorylation. Cytochrome c oxidase is the component of the respiratory chain that catalyzes the reduction of oxygen to water. Subunits 1-3 form the functional core of the enzyme complex. Co I is the catalytic subunit of the enzyme. Electrons originating in cytochrome c or a quinol are transferred to the bimetallic center formed by a high-spin heme and copper B. This is Cytochrome c oxidase subunit 1 homolog, bacteroid (fixN) from Rhizobium meliloti (strain 1021) (Ensifer meliloti).